Consider the following 62-residue polypeptide: UPF0291 protein CLB_2550 (62 aa).

This sequence belongs to the UPF0291 family.

It localises to the cytoplasm. The sequence is that of UPF0291 protein CLB_2550 from Clostridium botulinum (strain ATCC 19397 / Type A).